Here is a 63-residue protein sequence, read N- to C-terminus: Period circadian protein (63 aa).

A disordered region spans residues 1–63 (EGSGGSGSSG…VTLTESLLNK (63 aa)). Composition is skewed to low complexity over residues 9–31 (SGNFTTGSNVRMSSVTNTSNAGT) and 39–49 (SAAASGASVNA). Positions 54-63 (VTLTESLLNK) are enriched in polar residues.

As to quaternary structure, forms a heterodimer with timeless (TIM); the complex then translocates into the nucleus. Post-translationally, phosphorylated with a circadian rhythmicity, probably by the double-time protein (dbt). Phosphorylation could be implicated in the stability of per monomer and in the formation of heterodimer per-tim.

The protein localises to the nucleus. Its subcellular location is the cytoplasm. The protein resides in the perinuclear region. Essential for biological clock functions. Determines the period length of circadian and ultradian rhythms; an increase in PER dosage leads to shortened circadian rhythms and a decrease leads to lengthened circadian rhythms. Essential for the circadian rhythmicity of locomotor activity, eclosion behavior, and for the rhythmic component of the male courtship song that originates in the thoracic nervous system. The biological cycle depends on the rhythmic formation and nuclear localization of the TIM-PER complex. Light induces the degradation of TIM, which promotes elimination of PER. Nuclear activity of the heterodimer coordinatively regulates PER and TIM transcription through a negative feedback loop. Behaves as a negative element in circadian transcriptional loop. Does not appear to bind DNA, suggesting indirect transcriptional inhibition. The protein is Period circadian protein (per) of Drosophila immigrans (Fruit fly).